Reading from the N-terminus, the 467-residue chain is Chromosomal replication initiator protein DnaA (467 aa).

The domain I, interacts with DnaA modulators stretch occupies residues 1–90 (MSLSLWQQCL…KPVTQTPQAA (90 aa)). The tract at residues 91-130 (VTSNVAAPAQVAQTQPQRAAPSTRSGWDNVPAPAEPTYRS) is domain II. A compositionally biased stretch (low complexity) spans 98–111 (PAQVAQTQPQRAAP). The segment at 98–119 (PAQVAQTQPQRAAPSTRSGWDN) is disordered. A domain III, AAA+ region region spans residues 131–347 (NVNVKHTFDN…GALNRVIANA (217 aa)). ATP contacts are provided by glycine 175, glycine 177, lysine 178, and threonine 179. The tract at residues 348–467 (NFTGRAITID…FSNLIRTLSS (120 aa)) is domain IV, binds dsDNA.

Belongs to the DnaA family. In terms of assembly, oligomerizes as a right-handed, spiral filament on DNA at oriC.

It localises to the cytoplasm. Functionally, plays an essential role in the initiation and regulation of chromosomal replication. ATP-DnaA binds to the origin of replication (oriC) to initiate formation of the DNA replication initiation complex once per cell cycle. Binds the DnaA box (a 9 base pair repeat at the origin) and separates the double-stranded (ds)DNA. Forms a right-handed helical filament on oriC DNA; dsDNA binds to the exterior of the filament while single-stranded (ss)DNA is stabiized in the filament's interior. The ATP-DnaA-oriC complex binds and stabilizes one strand of the AT-rich DNA unwinding element (DUE), permitting loading of DNA polymerase. After initiation quickly degrades to an ADP-DnaA complex that is not apt for DNA replication. Binds acidic phospholipids. The protein is Chromosomal replication initiator protein DnaA of Shigella sonnei (strain Ss046).